Here is a 518-residue protein sequence, read N- to C-terminus: Tyrosine/DOPA decarboxylase 1 (518 aa).

Position 321 is an N6-(pyridoxal phosphate)lysine (lysine 321).

It belongs to the group II decarboxylase family. In terms of assembly, homodimer. Requires pyridoxal 5'-phosphate as cofactor. Predominantly expressed in the roots.

The catalysed reaction is L-tyrosine + H(+) = tyramine + CO2. The enzyme catalyses L-dopa + H(+) = dopamine + CO2. It catalyses the reaction 5-hydroxy-L-tryptophan + H(+) = serotonin + CO2. Functionally, marginally higher substrate specificity for L-DOPA over L-tyrosine. In Papaver somniferum (Opium poppy), this protein is Tyrosine/DOPA decarboxylase 1 (TYDC1).